Consider the following 692-residue polypeptide: Protein arginine N-methyltransferase 7 (692 aa).

SAM-dependent MTase PRMT-type domains lie at 14–345 (SLEW…YCVW) and 358–684 (SAYQ…ITME). Residue Arg32 is modified to Omega-N-methylarginine. Residues Glu144 and Glu153 contribute to the active site.

It belongs to the class I-like SAM-binding methyltransferase superfamily. Protein arginine N-methyltransferase family. PRMT7 subfamily. In terms of assembly, homodimer and heterodimer. Interacts with PRMT5 and SNRPD3. Interacts with CTCFL.

Its subcellular location is the cytoplasm. The protein resides in the cytosol. It localises to the nucleus. It carries out the reaction L-arginyl-[protein] + S-adenosyl-L-methionine = N(omega)-methyl-L-arginyl-[protein] + S-adenosyl-L-homocysteine + H(+). Its function is as follows. Arginine methyltransferase that can both catalyze the formation of omega-N monomethylarginine (MMA) and symmetrical dimethylarginine (sDMA), with a preference for the formation of MMA. Specifically mediates the symmetrical dimethylation of arginine residues in the small nuclear ribonucleoproteins Sm D1 (SNRPD1) and Sm D3 (SNRPD3); such methylation being required for the assembly and biogenesis of snRNP core particles. Specifically mediates the symmetric dimethylation of histone H4 'Arg-3' to form H4R3me2s. Plays a role in gene imprinting by being recruited by CTCFL at the H19 imprinted control region (ICR) and methylating histone H4 to form H4R3me2s, possibly leading to recruit DNA methyltransferases at these sites. May also play a role in embryonic stem cell (ESC) pluripotency. Also able to mediate the arginine methylation of histone H2A and myelin basic protein (MBP) in vitro; the relevance of such results is however unclear in vivo. This is Protein arginine N-methyltransferase 7 (Prmt7) from Mus musculus (Mouse).